A 319-amino-acid chain; its full sequence is Melanoma-associated antigen B2 (319 aa).

Positions 1-17 (MPRGQKSKLRAREKRRK) are enriched in basic residues. The segment at 1–112 (MPRGQKSKLR…TKSPSEDPLT (112 aa)) is disordered. Low complexity-rich tracts occupy residues 39–57 (PCCS…PAAG), 67–79 (TTAA…VSST), and 94–105 (ASSSQASTSTKS). Phosphoserine is present on residues S77 and S105. An MAGE domain is found at 111–310 (LTRKSGSLVQ…CAFPTHYEEA (200 aa)).

In terms of assembly, interacts with TRIM28. As to expression, expressed in testis and placenta, and in a significant fraction of tumors of various histologic types.

In terms of biological role, may enhance ubiquitin ligase activity of RING-type zinc finger-containing E3 ubiquitin-protein ligases. Proposed to act through recruitment and/or stabilization of the Ubl-conjugating enzyme (E2) at the E3:substrate complex. This Homo sapiens (Human) protein is Melanoma-associated antigen B2 (MAGEB2).